A 137-amino-acid chain; its full sequence is Large ribosomal subunit protein uL22c (137 aa).

The protein belongs to the universal ribosomal protein uL22 family. In terms of assembly, part of the 50S ribosomal subunit.

Its subcellular location is the plastid. The protein localises to the chloroplast. In terms of biological role, this protein binds specifically to 23S rRNA. Functionally, the globular domain of the protein is located near the polypeptide exit tunnel on the outside of the subunit, while an extended beta-hairpin is found that lines the wall of the exit tunnel in the center of the 70S ribosome. The chain is Large ribosomal subunit protein uL22c (rpl22) from Oenothera argillicola (Appalachian evening primrose).